We begin with the raw amino-acid sequence, 31 residues long: Sarcolipin (31 aa).

Residues 1 to 7 (MERSTRE) lie on the Cytoplasmic side of the membrane. A helical transmembrane segment spans residues 8 to 26 (LCLNFTVVLITVILIWLLV). Residues 27–31 (RSYQY) lie on the Lumenal side of the membrane.

This sequence belongs to the sarcolipin family. In terms of assembly, homooligomer. Can also form heterooligomers with other sarcoplasmic/endoplasmic reticulum calcium ATPase (SERCA) regulators ARLN, ERLN, PLN and STRIT1/DWORF. Monomer. Interacts with calcium ATPase ATP2A1/SERCA1. Interacts as a monomer with ATP2A2/SERCA2; the interaction decreases ATP2A2 Ca(2+) affinity. Interacts with VMP1; VMP1 competes with PLN and SLN to prevent them from forming an inhibitory complex with ATP2A2. Skeletal muscle (at protein level).

It localises to the sarcoplasmic reticulum membrane. The protein localises to the endoplasmic reticulum membrane. In terms of biological role, reversibly inhibits the activity of ATP2A1/SERCA1 and ATP2A2/SERCA2 in sarcoplasmic reticulum by decreasing the apparent affinity of the ATPase for Ca(2+). Also inhibits the activity of ATP2A3/SERCA3. Modulates calcium re-uptake during muscle relaxation and plays an important role in calcium homeostasis in muscle. Required for muscle-based, non-shivering thermogenesis. The polypeptide is Sarcolipin (SLN) (Oryctolagus cuniculus (Rabbit)).